Reading from the N-terminus, the 548-residue chain is Adenine deaminase (548 aa).

Belongs to the metallo-dependent hydrolases superfamily. Adenine deaminase family. It depends on Mn(2+) as a cofactor.

The catalysed reaction is adenine + H2O + H(+) = hypoxanthine + NH4(+). The protein is Adenine deaminase of Borreliella afzelii (strain PKo) (Borrelia afzelii).